A 573-amino-acid chain; its full sequence is Kinesin light chain 1 (573 aa).

Residues 27–156 are a coiled coil; that stretch reads KTKQVIQGLE…HLEFMNQLKK (130 aa). Over residues 155-176 the composition is skewed to basic and acidic residues; the sequence is KKYDDDISPSEDKDTDSTKEPL. Residues 155–203 form a disordered region; it reads KKYDDDISPSEDKDTDSTKEPLDDLFPNDEDDPGQGIQQQHSSAAAAAQ. Residue Ser162 is modified to Phosphoserine. Over residues 188–203 the composition is skewed to low complexity; that stretch reads GQGIQQQHSSAAAAAQ. TPR repeat units lie at residues 213-246, 255-288, 297-330, 339-372, and 381-414; these read LRTL…LEKT, ATML…REKT, AATL…REKV, AKQL…YQTK, and AKTK…AHER. Position 449 is a phosphotyrosine (Tyr449). At Ser460 the chain carries Phosphoserine. The TPR 6 repeat unit spans residues 464 to 497; the sequence is TTTLKNLGALYRRQGKFEAAETLEEAAMRSRKQG. Ser521 and Ser524 each carry phosphoserine; by AMPK. Glu547 is modified (phosphoserine). The segment at 553-573 is disordered; the sequence is SGRASFCGKRQQQQWPGRRHR.

This sequence belongs to the kinesin light chain family. Oligomeric complex composed of two heavy chains and two light chains. Interacts with SPAG9. Interacts with ATCAY; may link mitochondria to KLC1 and regulate mitochondria localization into neuron projections. Interacts (via TPR repeats) with TOR1A; the interaction associates TOR1A with the kinesin oligomeric complex. Interacts with BORCS5. Interacts with MAPK8IP3/JIP3 and NTRK2/TRKB; interaction with NTRK2/TRKB is mediated by MAPK8IP3/JIP3. Interacts with CLSTN1; phosphorylation at Ser-460 inhibits interaction with CLSTN1. In terms of assembly, (Microbial infection) Interacts with adenovirus hexon-interlacing protein; this interaction leads to capsid disruption at the nuclear pore complex during virus entry into host cell. In terms of processing, phosphorylation at Ser-460 by ERK inhibits interaction with CLSTN1 and localization to cytoplasmic vesicles. Found in a variety of tissues. Mostly abundant in brain and spine.

Its subcellular location is the cell projection. It is found in the growth cone. The protein localises to the cytoplasmic vesicle. The protein resides in the cytoplasm. It localises to the cytoskeleton. Its function is as follows. Kinesin is a microtubule-associated force-producing protein that may play a role in organelle transport. The light chain may function in coupling of cargo to the heavy chain or in the modulation of its ATPase activity. In Homo sapiens (Human), this protein is Kinesin light chain 1 (KLC1).